Reading from the N-terminus, the 176-residue chain is Inner membrane-spanning protein YciB (176 aa).

5 helical membrane-spanning segments follow: residues T24 to H44, P49 to H69, W76 to F96, L119 to Y139, and F149 to L169.

This sequence belongs to the YciB family.

The protein localises to the cell inner membrane. Its function is as follows. Plays a role in cell envelope biogenesis, maintenance of cell envelope integrity and membrane homeostasis. In Paraburkholderia xenovorans (strain LB400), this protein is Inner membrane-spanning protein YciB.